We begin with the raw amino-acid sequence, 172 residues long: Putative phosphoesterase BCAH820_1309 (172 aa).

His-34 functions as the Proton donor in the catalytic mechanism. Short sequence motifs (HXTX) lie at residues 34-37 and 115-118; these read HITL and HLTI. The active-site Proton acceptor is the His-115.

Belongs to the 2H phosphoesterase superfamily. YjcG family.

This is Putative phosphoesterase BCAH820_1309 from Bacillus cereus (strain AH820).